The sequence spans 1199 residues: Putative mitoferrin (1199 aa).

The chain crosses the membrane as a helical span at residues 32–52 (VPLWQHIFCGSIAGLMEHVFM). Asparagine 92, asparagine 171, asparagine 208, asparagine 268, asparagine 326, asparagine 353, asparagine 443, asparagine 499, asparagine 539, asparagine 649, asparagine 708, asparagine 715, and asparagine 723 each carry an N-linked (GlcNAc...) asparagine glycan. The helical transmembrane segment at 730-750 (GVNVVVLGCIPAHALYFSTFE) threads the bilayer. Asparagine 763 and asparagine 772 each carry an N-linked (GlcNAc...) asparagine glycan. One copy of the Solcar 1 repeat lies at 792 to 873 (LNYFSIAVSG…ICTNEKMKKI (82 aa)). 2 consecutive transmembrane segments (helical) span residues 795–815 (FSIAVSGFLATLVHDLIITPI) and 845–865 (LYLSLPITLLMNIPYQIIMIC). N-linked (GlcNAc...) asparagine glycosylation is found at asparagine 914, asparagine 922, asparagine 965, asparagine 1013, asparagine 1022, asparagine 1041, and asparagine 1056. Residues 1109–1191 (SYFVCAGIGG…WGTYETMKRF (83 aa)) form a Solcar 2 repeat. A helical transmembrane segment spans residues 1111 to 1131 (FVCAGIGGGIAAVLTNPLDVI).

It belongs to the mitochondrial carrier (TC 2.A.29) family.

The protein resides in the mitochondrion membrane. Functionally, putative iron transporter. In Plasmodium falciparum (isolate 3D7), this protein is Putative mitoferrin.